The primary structure comprises 375 residues: Tyrosine--tRNA ligase (375 aa).

L-tyrosine-binding residues include Tyr37, Tyr168, Gln172, Asp175, and Gln190. The 'KMSKS' region signature appears at 251 to 255 (KMSKS). Lys254 is a binding site for ATP.

This sequence belongs to the class-I aminoacyl-tRNA synthetase family. TyrS type 4 subfamily. Homodimer.

The protein resides in the cytoplasm. It carries out the reaction tRNA(Tyr) + L-tyrosine + ATP = L-tyrosyl-tRNA(Tyr) + AMP + diphosphate + H(+). In terms of biological role, catalyzes the attachment of tyrosine to tRNA(Tyr) in a two-step reaction: tyrosine is first activated by ATP to form Tyr-AMP and then transferred to the acceptor end of tRNA(Tyr). This is Tyrosine--tRNA ligase from Pyrococcus horikoshii (strain ATCC 700860 / DSM 12428 / JCM 9974 / NBRC 100139 / OT-3).